A 369-amino-acid chain; its full sequence is Nuclear pore complex-interacting protein family member A7 (369 aa).

Residues 151–171 (SMKEREHREEERQVSEAEENG) are disordered.

Belongs to the NPIP family.

The polypeptide is Nuclear pore complex-interacting protein family member A7 (NPIPA7) (Homo sapiens (Human)).